A 151-amino-acid chain; its full sequence is Cell division control protein 2 homolog 2 (151 aa).

Residues 1–151 form the Protein kinase domain; it reads ALKEIRMDNE…IMQTLQIESL (151 aa). K3 is an ATP binding site. D113 functions as the Proton acceptor in the catalytic mechanism.

It belongs to the protein kinase superfamily. CMGC Ser/Thr protein kinase family. CDC2/CDKX subfamily.

The catalysed reaction is L-seryl-[protein] + ATP = O-phospho-L-seryl-[protein] + ADP + H(+). The enzyme catalyses L-threonyl-[protein] + ATP = O-phospho-L-threonyl-[protein] + ADP + H(+). It carries out the reaction [DNA-directed RNA polymerase] + ATP = phospho-[DNA-directed RNA polymerase] + ADP + H(+). This chain is Cell division control protein 2 homolog 2, found in Pisum sativum (Garden pea).